Here is a 268-residue protein sequence, read N- to C-terminus: Mediator of RNA polymerase II transcription subunit 18 (268 aa).

Positions 91–112 (APASPVADQDAHMSGTDEKSSV) are disordered. Basic and acidic residues predominate over residues 99–112 (QDAHMSGTDEKSSV).

It belongs to the Mediator complex subunit 18 family. As to quaternary structure, component of the Mediator complex.

It localises to the nucleus. Component of the Mediator complex, a coactivator involved in the regulated transcription of nearly all RNA polymerase II-dependent genes. Mediator functions as a bridge to convey information from gene-specific regulatory proteins to the basal RNA polymerase II transcription machinery. Mediator is recruited to promoters by direct interactions with regulatory proteins and serves as a scaffold for the assembly of a functional preinitiation complex with RNA polymerase II and the general transcription factors. The sequence is that of Mediator of RNA polymerase II transcription subunit 18 (srb5) from Aspergillus fumigatus (strain ATCC MYA-4609 / CBS 101355 / FGSC A1100 / Af293) (Neosartorya fumigata).